Reading from the N-terminus, the 761-residue chain is MSRKGPRAEVCADCSAPDPGWASISRGVLVCDECCSVHRSLGRHISIVKHLRHSAWPPTLLQMVHTLASNGANSIWEHSLLDPAQVQSGRRKANPQDKVHPIKSEFIRAKYQMLAFVHKLPCRDDDGVTAKDLSKQLHSSVRTGNLETCLRLLSLGAQANFFHPEKGTTPLHVAAKAGQTLQAELLVVYGADPGSPDVNGRTPIDYARQAGHHELAERLVECQYELTDRLAFYLCGRKPDHKNGHYIIPQMADSLDLSELAKAAKKKLQALSNRLFEELAMDVYDEVDRRENDAVWLATQNHSTLVTERSAVPFLPVNPEYSATRNQGRQKLARFNAREFATLIIDILSEAKRRQQGKSLSSPTDNLELSLRSQSDLDDQHDYDSVASDEDTDQEPLRSTGATRSNRARSMDSSDLSDGAVTLQEYLELKKALATSEAKVQQLMKVNSSLSDELRRLQREIHKLQAENLQLRQPPGPVPTPPLPSERAEHTPMAPGGSTHRRDRQAFSMYEPGSALKPFGGPPGDELTTRLQPFHSTELEDDAIYSVHVPAGLYRIRKGVSASAVPFTPSSPLLSCSQEGSRHTSKLSRHGSGADSDYENTQSGDPLLGLEGKRFLELGKEEDFHPELESLDGDLDPGLPSTEDVILKTEQVTKNIQELLRAAQEFKHDSFVPCSEKIHLAVTEMASLFPKRPALEPVRSSLRLLNASAYRLQSECRKTVPPEPGAPVDFQLLTQQVIQCAYDIAKAAKQLVTITTREKKQ.

Residues 1-124 enclose the Arf-GAP domain; sequence MSRKGPRAEV…AFVHKLPCRD (124 aa). The interaction with gamma-tubulin and localization to the centrosome stretch occupies residues 1-124; that stretch reads MSRKGPRAEV…AFVHKLPCRD (124 aa). The C4-type zinc-finger motif lies at 11-34; that stretch reads CADCSAPDPGWASISRGVLVCDEC. ANK repeat units lie at residues 132–161, 166–195, and 199–228; these read DLSKQLHSSVRTGNLETCLRLLSLGAQANF, KGTTPLHVAAKAGQTLQAELLVVYGADPGS, and NGRTPIDYARQAGHHELAERLVECQYELTD. At Y224 the chain carries Phosphotyrosine. An interaction with PCLO region spans residues 245 to 365; it reads HYIIPQMADS…QGKSLSSPTD (121 aa). The interaction with PTK2/FAK1 stretch occupies residues 253 to 415; the sequence is DSLDLSELAK…NRARSMDSSD (163 aa). The tract at residues 254-367 is interaction with ARHGEF7; that stretch reads SLDLSELAKA…KSLSSPTDNL (114 aa). Residues 354–416 are disordered; it reads RQQGKSLSSP…RARSMDSSDL (63 aa). Over residues 357 to 374 the composition is skewed to polar residues; that stretch reads GKSLSSPTDNLELSLRSQ. Phosphoserine occurs at positions 359 and 362. T364 is subject to Phosphothreonine. Residues 366 to 587 are interaction with NCK2 and GRIN3A; that stretch reads NLELSLRSQS…QEGSRHTSKL (222 aa). A required for localization at synapses region spans residues 366–587; sequence NLELSLRSQS…QEGSRHTSKL (222 aa). Residues S370 and S375 each carry the phosphoserine modification. Y383 carries the phosphotyrosine modification. S385 and S388 each carry phosphoserine. The segment covering 385–394 has biased composition (acidic residues); that stretch reads SVASDEDTDQ. T392 carries the phosphothreonine modification. S410, S413, and S417 each carry phosphoserine. Residues 411 to 466 are interaction with MAPK1; the sequence is MDSSDLSDGAVTLQEYLELKKALATSEAKVQQLMKVNSSLSDELRRLQREIHKLQA. The tract at residues 420-620 is interaction with IKBKG; sequence AVTLQEYLEL…EGKRFLELGK (201 aa). Residues 440 to 474 adopt a coiled-coil conformation; the sequence is VQQLMKVNSSLSDELRRLQREIHKLQAENLQLRQP. The interval 471–501 is disordered; the sequence is LRQPPGPVPTPPLPSERAEHTPMAPGGSTHR. Residues 474-484 are compositionally biased toward pro residues; sequence PPGPVPTPPLP. Position 480 is a phosphothreonine (T480). A phosphoserine mark is found at S498 and S536. Residue T537 is modified to Phosphothreonine. Phosphotyrosine occurs at positions 545 and 554. S561, S571, S592, and S596 each carry phosphoserine. The segment at 572 to 606 is disordered; the sequence is PLLSCSQEGSRHTSKLSRHGSGADSDYENTQSGDP. Position 601 is a phosphothreonine (T601). S630 carries the post-translational modification Phosphoserine. The tract at residues 637–761 is interaction with PXN and TGFB1I1; it reads PGLPSTEDVI…VTITTREKKQ (125 aa).

In terms of assembly, forms homodimers and possibly oligomers. May forms heterooligomers with GIT2. Interacts with G protein-coupled receptor kinases, including GRK2, GRK3, GRK5 and GRK6. Interacts with PPFIA1, PPFIA2 and PPFIA4. Interacts with GRIP1 and forms a ternary complex with PPFIA1 and GRIP1. Directly interacts with ARHGEF7/beta-PIX, forming in vitro a heptameric complex made of a GIT1 dimer and an ARHGEF7 trimer. Directly interacts with PXN/paxillin; this interaction is enhanced in the presence of ARHGEF7. Directly interacts (via C-terminus) with TGFB1I1/Hic-5 (via LD motif 3). Directly interacts with PTK2/FAK1. May interact with PTK2B/PYK2; this interaction may be indirect. Interacts with AMPA receptors GRIA2/3. Directly interacts with protein Piccolo/PCLO. Forms a complex with Ephrin-B1/EFNB1 and NCK2/GRB4 (via SH2); this interaction is important for spine morphogenesis and synapse formation. Interaction with NCK2 is transient and depends upon GIT1 phosphorylation at Tyr-383. Interacts with GRIN3A/GluN3A (via C-terminus); this interaction competes with GIT1 interaction with ARHGEF7 and limits synaptic localization of GIT1. Interacts with IKBKG/NEMO in resting bone mesenchymal stem cells, as well as in TNF-stimulated cells; this interaction may increase IKBKG affinity for 'Lys-63'-linked polyubiquitin chains. Interacts with GABA(A) receptors, including GABRB3 and GABRG2. Interacts with SCRIB. Interacts (via N- and C-terminus) with ENTR1/SDCCAG3 (via N-terminus); this interaction is direct. May form a tripartite complex with ENTR1 and PTPN13. Interacts with YWHAZ. Interacts with PAK1. Interacts with PAK3. Directly interacts (via N-terminus) with gamma-tubulin. Interacts with MAPK1 and MAPK3; this interaction is required for MAPK1/3 recruitment to focal adhesions. In terms of processing, phosphorylated by PAK1. Phosphorylation on tyrosine residues may be catalyzed by PTK2/FAK1 and SRC in growing fibroblasts. Phosphorylation at Tyr-383 is induced by activation of Ephrin-B1/EFNB1 and catalyzed by SRC family kinases. It is required for the interaction with NCK2 and for GIT1 recruitment to synapses in hippocampal neurons.

Its subcellular location is the cytoplasm. The protein localises to the synapse. It is found in the presynapse. The protein resides in the postsynapse. It localises to the postsynaptic density. Its subcellular location is the cell junction. The protein localises to the focal adhesion. It is found in the cell projection. The protein resides in the lamellipodium. It localises to the cytoskeleton. Its subcellular location is the microtubule organizing center. The protein localises to the centrosome. It is found in the spindle pole. In terms of biological role, GTPase-activating protein for ADP ribosylation factor family members, including ARF1. Multidomain scaffold protein that interacts with numerous proteins and therefore participates in many cellular functions, including receptor internalization, focal adhesion remodeling, and signaling by both G protein-coupled receptors and tyrosine kinase receptors. Through PAK1 activation, positively regulates microtubule nucleation during interphase. Plays a role in the regulation of cytokinesis; for this function, may act in a pathway also involving ENTR1 and PTPN13. May promote cell motility both by regulating focal complex dynamics and by local activation of RAC1. May act as scaffold for MAPK1/3 signal transduction in focal adhesions. Recruits MAPK1/3/ERK1/2 to focal adhesions after EGF stimulation via a Src-dependent pathway, hence stimulating cell migration. Plays a role in brain development and function. Involved in the regulation of spine density and synaptic plasticity that is required for processes involved in learning. Plays an important role in dendritic spine morphogenesis and synapse formation. In hippocampal neurons, recruits guanine nucleotide exchange factors (GEFs), such as ARHGEF7/beta-PIX, to the synaptic membrane. These in turn locally activate RAC1, which is an essential step for spine morphogenesis and synapse formation. May contribute to the organization of presynaptic active zones through oligomerization and formation of a Piccolo/PCLO-based protein network, which includes ARHGEF7/beta-PIX and FAK1. In neurons, through its interaction with liprin-alpha family members, may be required for AMPA receptor (GRIA2/3) proper targeting to the cell membrane. In complex with GABA(A) receptors and ARHGEF7, plays a crucial role in regulating GABA(A) receptor synaptic stability, maintaining GPHN/gephyrin scaffolds and hence GABAergic inhibitory synaptic transmission, by locally coordinating RAC1 and PAK1 downstream effector activity, leading to F-actin stabilization. May also be important for RAC1 downstream signaling pathway through PAK3 and regulation of neuronal inhibitory transmission at presynaptic input. Required for successful bone regeneration during fracture healing. The function in intramembranous ossification may, at least partly, exerted by macrophages in which GIT1 is a key negative regulator of redox homeostasis, IL1B production, and glycolysis, acting through the ERK1/2/NRF2/NFE2L2 axis. May play a role in angiogenesis during fracture healing. In this process, may regulate activation of the canonical NF-kappa-B signal in bone mesenchymal stem cells by enhancing the interaction between NEMO and 'Lys-63'-ubiquitinated RIPK1/RIP1, eventually leading to enhanced production of VEGFA and others angiogenic factors. Essential for VEGF signaling through the activation of phospholipase C-gamma and ERK1/2, hence may control endothelial cell proliferation and angiogenesis. This Homo sapiens (Human) protein is ARF GTPase-activating protein GIT1 (GIT1).